The chain runs to 126 residues: Fluoride-specific ion channel FluC 2 (126 aa).

4 helical membrane passes run 11-31 (IFLI…LCEL), 34-54 (GQLG…MIMY), 66-86 (GKIA…TFAV), and 93-113 (FIPA…GVFF). Positions 76 and 79 each coordinate Na(+).

The protein belongs to the fluoride channel Fluc/FEX (TC 1.A.43) family.

It is found in the cell membrane. It carries out the reaction fluoride(in) = fluoride(out). With respect to regulation, na(+) is not transported, but it plays an essential structural role and its presence is essential for fluoride channel function. Fluoride-specific ion channel. Important for reducing fluoride concentration in the cell, thus reducing its toxicity. This Methanosarcina acetivorans (strain ATCC 35395 / DSM 2834 / JCM 12185 / C2A) protein is Fluoride-specific ion channel FluC 2.